A 196-amino-acid polypeptide reads, in one-letter code: Lipoprotein signal peptidase (196 aa).

3 consecutive transmembrane segments (helical) span residues 17 to 37, 73 to 93, and 96 to 116; these read SIII…IDNL, SNAI…YLMI, and NTIG…GNLI. Active-site residues include aspartate 126 and aspartate 144. Residues 135 to 155 form a helical membrane-spanning segment; it reads YSFPVFNLADCFITIGVIILI.

This sequence belongs to the peptidase A8 family.

The protein resides in the cell inner membrane. The enzyme catalyses Release of signal peptides from bacterial membrane prolipoproteins. Hydrolyzes -Xaa-Yaa-Zaa-|-(S,diacylglyceryl)Cys-, in which Xaa is hydrophobic (preferably Leu), and Yaa (Ala or Ser) and Zaa (Gly or Ala) have small, neutral side chains.. It participates in protein modification; lipoprotein biosynthesis (signal peptide cleavage). In terms of biological role, this protein specifically catalyzes the removal of signal peptides from prolipoproteins. The sequence is that of Lipoprotein signal peptidase from Rickettsia akari (strain Hartford).